We begin with the raw amino-acid sequence, 384 residues long: S-adenosylmethionine synthase (384 aa).

Histidine 15 provides a ligand contact to ATP. Aspartate 17 contributes to the Mg(2+) binding site. Glutamate 43 is a K(+) binding site. L-methionine is bound by residues glutamate 56 and glutamine 99. Residues 99 to 109 are flexible loop; it reads QSSDINQGVDR. Residues 164-166, 230-231, aspartate 239, 245-246, alanine 262, and lysine 266 contribute to the ATP site; these read DAK, RF, and RK. L-methionine is bound at residue aspartate 239. Residue lysine 270 participates in L-methionine binding.

The protein belongs to the AdoMet synthase family. As to quaternary structure, homotetramer; dimer of dimers. The cofactor is Mg(2+). K(+) serves as cofactor.

The protein resides in the cytoplasm. It catalyses the reaction L-methionine + ATP + H2O = S-adenosyl-L-methionine + phosphate + diphosphate. It participates in amino-acid biosynthesis; S-adenosyl-L-methionine biosynthesis; S-adenosyl-L-methionine from L-methionine: step 1/1. In terms of biological role, catalyzes the formation of S-adenosylmethionine (AdoMet) from methionine and ATP. The overall synthetic reaction is composed of two sequential steps, AdoMet formation and the subsequent tripolyphosphate hydrolysis which occurs prior to release of AdoMet from the enzyme. The chain is S-adenosylmethionine synthase from Histophilus somni (strain 129Pt) (Haemophilus somnus).